Consider the following 524-residue polypeptide: Beta-glucosidase 22 (524 aa).

Positions 1–24 (MALQKFPLLGLLFLITIVVSSTIA) are cleaved as a signal peptide. Q55 lines the a beta-D-glucoside pocket. N61 is a glycosylation site (N-linked (GlcNAc...) asparagine). A beta-D-glucoside contacts are provided by residues H158 and 203-204 (NE). E204 functions as the Proton donor in the catalytic mechanism. An intrachain disulfide couples C223 to C230. A beta-D-glucoside-binding positions include Y346, E418, W468, 475 to 476 (EW), and F484. The active-site Nucleophile is E418. An N-linked (GlcNAc...) asparagine glycan is attached at N494. The Prevents secretion from ER motif lies at 521 to 524 (KDEL).

The protein belongs to the glycosyl hydrolase 1 family. Component of the PYK10 complex, at least composed of PYK10/BGLU23, BGLU21, BGLU22, JAL22, JAL23, PBP1/JAL30, PBP2/JAL31, JAL32, JAL33, JAL34, JAL35, GLL22 and GLL23. As to expression, expressed exclusively in roots.

The protein resides in the endoplasmic reticulum lumen. The catalysed reaction is Hydrolysis of terminal, non-reducing beta-D-glucosyl residues with release of beta-D-glucose.. Its activity is regulated as follows. Activated upon binding to PBP1 or PBP2. Beta-D-glucosidase active on scopolin &gt;&gt; esculin &gt;&gt; 4-MU-glucoside. No activity with DIMBOA-glucoside, pNP-glucoside, oNP-glucoside and sinigrin as substrates. The polypeptide is Beta-glucosidase 22 (Arabidopsis thaliana (Mouse-ear cress)).